The primary structure comprises 428 residues: Mitochondrial import inner membrane translocase subunit TIM50-C (428 aa).

The chain crosses the membrane as a helical span at residues 59-79 (LFTCTALPAAAPALFSILHTA). At 80-428 (RGYSSTTKQE…KQWSRNILGR (349 aa)) the chain is on the mitochondrial intermembrane side. Residues 112 to 138 (FPQTSPEVDSNAEQERKKREEEEEKEN) are disordered. Positions 124–138 (EQERKKREEEEEKEN) are enriched in basic and acidic residues. An FCP1 homology domain is found at 224–367 (YVQPRYTLVL…LDLIAFLKII (144 aa)).

Belongs to the TIM50 family. As to quaternary structure, component of the TIM23 complex at least composed of Tim23, Tim17 (Tim17a1, Tim17a2 or Tim17b1) and a Tim50.

It localises to the mitochondrion inner membrane. Functionally, essential component of the TIM23 complex, a complex that mediates the translocation of transit peptide-containing proteins across the mitochondrial inner membrane. The chain is Mitochondrial import inner membrane translocase subunit TIM50-C (ttm50) from Drosophila melanogaster (Fruit fly).